The primary structure comprises 73 residues: Large ribosomal subunit protein bL32c (73 aa).

It belongs to the bacterial ribosomal protein bL32 family.

The protein resides in the plastid. The protein localises to the chloroplast. This chain is Large ribosomal subunit protein bL32c, found in Jasminum nudiflorum (Winter jasmine).